Here is a 120-residue protein sequence, read N- to C-terminus: U3-hexatoxin-Hi1a (120 aa).

The N-terminal stretch at 1–19 (MKLLYFFVVITVLVAVAAA) is a signal peptide. Positions 20-51 (LPAKTEEQIAAEENQLVEDLVQYAGTRLTRKR) are excised as a propeptide.

The protein belongs to the neurotoxin 25 family. F7 subfamily. Contains 4 disulfide bonds. As to expression, expressed by the venom gland.

It localises to the secreted. Weak insecticidal toxin with probable ion channel impairing activity. In vivo, induces paralysis when injected into sheep blowflies (L.cuprina). Shows weak toxicity, since it is only toxic at high doses, and flies recover within 24 hours. This is U3-hexatoxin-Hi1a from Hadronyche infensa (Fraser island funnel-web spider).